The following is an 82-amino-acid chain: Cytotoxin homolog Clbp-3 (82 aa).

The N-terminal stretch at 1–21 is a signal peptide; the sequence is MKTLLLTLVVVTIVCLDLGYT. Disulfide bonds link C24-C43, C36-C60, C64-C75, and C76-C81.

This sequence belongs to the three-finger toxin family. Short-chain subfamily. Orphan group XV sub-subfamily. As to expression, expressed by the venom gland.

It is found in the secreted. The protein localises to the target cell membrane. Its function is as follows. Has low cytotoxic activity. The protein is Cytotoxin homolog Clbp-3 of Naja atra (Chinese cobra).